Consider the following 409-residue polypeptide: Dihydrolipoyllysine-residue succinyltransferase component of 2-oxoglutarate dehydrogenase complex (409 aa).

In terms of domain architecture, Lipoyl-binding spans 2–77; that stretch reads AIEIKAPTFP…LSNELLGKLN (76 aa). Lys-43 is modified (N6-lipoyllysine). The 38-residue stretch at 112–149 folds into the Peripheral subunit-binding (PSBD) domain; sequence ILSPAARKLAEEAGIDPNSIAGTGKGGRVTKEDVVAAV. Residues His-380 and Asp-384 contribute to the active site.

Belongs to the 2-oxoacid dehydrogenase family. As to quaternary structure, forms a 24-polypeptide structural core with octahedral symmetry. Part of the 2-oxoglutarate dehydrogenase (OGDH) complex composed of E1 (2-oxoglutarate dehydrogenase), E2 (dihydrolipoamide succinyltransferase) and E3 (dihydrolipoamide dehydrogenase); the complex contains multiple copies of the three enzymatic components (E1, E2 and E3). (R)-lipoate is required as a cofactor.

The catalysed reaction is N(6)-[(R)-dihydrolipoyl]-L-lysyl-[protein] + succinyl-CoA = N(6)-[(R)-S(8)-succinyldihydrolipoyl]-L-lysyl-[protein] + CoA. It participates in amino-acid degradation; L-lysine degradation via saccharopine pathway; glutaryl-CoA from L-lysine: step 6/6. In terms of biological role, E2 component of the 2-oxoglutarate dehydrogenase (OGDH) complex which catalyzes the second step in the conversion of 2-oxoglutarate to succinyl-CoA and CO(2). The polypeptide is Dihydrolipoyllysine-residue succinyltransferase component of 2-oxoglutarate dehydrogenase complex (sucB) (Pseudomonas aeruginosa (strain ATCC 15692 / DSM 22644 / CIP 104116 / JCM 14847 / LMG 12228 / 1C / PRS 101 / PAO1)).